The primary structure comprises 213 residues: Kynurenine formamidase (213 aa).

W18 provides a ligand contact to substrate. 3 residues coordinate Zn(2+): H48, H52, and D54. H58 acts as the Proton donor/acceptor in catalysis. Zn(2+) is bound by residues H160 and E172.

This sequence belongs to the Cyclase 1 superfamily. KynB family. Homodimer. Requires Zn(2+) as cofactor.

The catalysed reaction is N-formyl-L-kynurenine + H2O = L-kynurenine + formate + H(+). The protein operates within amino-acid degradation; L-tryptophan degradation via kynurenine pathway; L-kynurenine from L-tryptophan: step 2/2. Its function is as follows. Catalyzes the hydrolysis of N-formyl-L-kynurenine to L-kynurenine, the second step in the kynurenine pathway of tryptophan degradation. In Burkholderia pseudomallei (strain 668), this protein is Kynurenine formamidase.